A 408-amino-acid polypeptide reads, in one-letter code: Putative transporter AmpG 2 (408 aa).

A run of 11 helical transmembrane segments spans residues 11 to 31, 49 to 69, 84 to 104, 110 to 130, 154 to 174, 177 to 197, 224 to 244, 261 to 281, 294 to 311, 353 to 373, and 382 to 402; these read IFNILFILIIAFPGGLIYLLT, IGLFGLVNFIHIFKFLWGPLL, YCLVITLINCIFCVYVLTSFN, IPFVLCLVVLAFFSSIYDMLI, FRIGILISGSGALYLSTIISW, VYRTMAILCIPSLLLIIFYPL, CIVIISFMLLYRLQDSFLSIM, VGYKAFGMCATIFGGVIGGFL, VLIYHALSSLSFIYLYFL, IALITSITNVGTILIGSISGY, and YFFIVAGLCFIPAYILILYLP.

Belongs to the major facilitator superfamily.

The protein resides in the cell inner membrane. This Rickettsia prowazekii (strain Madrid E) protein is Putative transporter AmpG 2 (ampG2).